Here is a 319-residue protein sequence, read N- to C-terminus: ATP-dependent 6-phosphofructokinase (319 aa).

Gly11 lines the ATP pocket. 21–25 lines the ADP pocket; sequence RAVVR. Residues 72-73 and 102-105 contribute to the ATP site; these read RY and GDGS. Asp103 serves as a coordination point for Mg(2+). 125–127 provides a ligand contact to substrate; it reads TID. Residue Asp127 is the Proton acceptor of the active site. Arg154 is an ADP binding site. Substrate is bound by residues Arg162 and 169–171; that span reads MGR. ADP contacts are provided by residues 185-187, Arg211, and 213-215; these read GAE and KKH. Residues Glu222, Arg243, and 249–252 contribute to the substrate site; that span reads HVQR.

The protein belongs to the phosphofructokinase type A (PFKA) family. ATP-dependent PFK group I subfamily. Prokaryotic clade 'B1' sub-subfamily. Homotetramer. The cofactor is Mg(2+).

The protein localises to the cytoplasm. The catalysed reaction is beta-D-fructose 6-phosphate + ATP = beta-D-fructose 1,6-bisphosphate + ADP + H(+). Its pathway is carbohydrate degradation; glycolysis; D-glyceraldehyde 3-phosphate and glycerone phosphate from D-glucose: step 3/4. Its activity is regulated as follows. Allosterically activated by ADP and other diphosphonucleosides, and allosterically inhibited by phosphoenolpyruvate. Its function is as follows. Catalyzes the phosphorylation of D-fructose 6-phosphate to fructose 1,6-bisphosphate by ATP, the first committing step of glycolysis. The polypeptide is ATP-dependent 6-phosphofructokinase (Listeria innocua serovar 6a (strain ATCC BAA-680 / CLIP 11262)).